Consider the following 189-residue polypeptide: ATP-dependent protease subunit HslV (189 aa).

Residue T12 is part of the active site. Residues A172, C175, and T178 each contribute to the Na(+) site.

Belongs to the peptidase T1B family. HslV subfamily. In terms of assembly, a double ring-shaped homohexamer of HslV is capped on each side by a ring-shaped HslU homohexamer. The assembly of the HslU/HslV complex is dependent on binding of ATP.

It localises to the cytoplasm. It catalyses the reaction ATP-dependent cleavage of peptide bonds with broad specificity.. Allosterically activated by HslU binding. Its function is as follows. Protease subunit of a proteasome-like degradation complex believed to be a general protein degrading machinery. The protein is ATP-dependent protease subunit HslV of Anaplasma phagocytophilum (strain HZ).